The primary structure comprises 412 residues: MSGPTLLKESGPREVFCGLTSIVWLHRRMPDAFFLVVGSRTCAHLIQSAAGVMIFAEPRFGTAILNERDLAGLADAQEELDRVAKELLQRRPEIRTLFLVGSCPSEVIKLDLSRAAERLTDELQGRVRVVNYSGSGIETTFTQGEDGALAALIPFLPSSDERQLLLVGTLADAVEDRLVHLFNKLNINAIKSLPPRQSTDLPAVGPGTTVLLTQPYLTTTARLLKDRGARVLTAPFPLGAEGSRRWMETAARDFEVDEAQIDSVLSPLMERAQIALAPHREVLKGKRIFLLPESQLELPLARFLQRECGMELVEVGTPYLNRDQMAEEIALLPEGTPVMEGQHVELQLDRVRDSKPDLVVCGMGLANPLEAEGIATKWSIELVFSPIHGIDQAGELAELFSRPLRRHQLLAH.

Positions 17, 42, and 103 each coordinate [4Fe-4S] cluster.

This sequence belongs to the BchN/ChlN family. Protochlorophyllide reductase is composed of three subunits; ChlL, ChlN and ChlB. Forms a heterotetramer of two ChlB and two ChlN subunits. [4Fe-4S] cluster serves as cofactor.

The catalysed reaction is chlorophyllide a + oxidized 2[4Fe-4S]-[ferredoxin] + 2 ADP + 2 phosphate = protochlorophyllide a + reduced 2[4Fe-4S]-[ferredoxin] + 2 ATP + 2 H2O. The protein operates within porphyrin-containing compound metabolism; chlorophyll biosynthesis (light-independent). In terms of biological role, component of the dark-operative protochlorophyllide reductase (DPOR) that uses Mg-ATP and reduced ferredoxin to reduce ring D of protochlorophyllide (Pchlide) to form chlorophyllide a (Chlide). This reaction is light-independent. The NB-protein (ChlN-ChlB) is the catalytic component of the complex. This is Light-independent protochlorophyllide reductase subunit N from Synechococcus sp. (strain CC9902).